The chain runs to 115 residues: NADH-ubiquinone oxidoreductase chain 3 (115 aa).

Helical transmembrane passes span 3 to 23 (LMAT…IAFW), 55 to 75 (FFLV…LLPL), and 86 to 106 (LTLL…AYEW).

It belongs to the complex I subunit 3 family. As to quaternary structure, core subunit of respiratory chain NADH dehydrogenase (Complex I) which is composed of 45 different subunits. Interacts with TMEM186. Interacts with TMEM242.

Its subcellular location is the mitochondrion inner membrane. It carries out the reaction a ubiquinone + NADH + 5 H(+)(in) = a ubiquinol + NAD(+) + 4 H(+)(out). In terms of biological role, core subunit of the mitochondrial membrane respiratory chain NADH dehydrogenase (Complex I) which catalyzes electron transfer from NADH through the respiratory chain, using ubiquinone as an electron acceptor. Essential for the catalytic activity of complex I. In Mammuthus primigenius (Siberian woolly mammoth), this protein is NADH-ubiquinone oxidoreductase chain 3.